A 194-amino-acid polypeptide reads, in one-letter code: Small ribosomal subunit protein uS7 (194 aa).

This sequence belongs to the universal ribosomal protein uS7 family. In terms of assembly, part of the 30S ribosomal subunit.

Functionally, one of the primary rRNA binding proteins, it binds directly to 16S rRNA where it nucleates assembly of the head domain of the 30S subunit. Is located at the subunit interface close to the decoding center. In Methanospirillum hungatei JF-1 (strain ATCC 27890 / DSM 864 / NBRC 100397 / JF-1), this protein is Small ribosomal subunit protein uS7.